The primary structure comprises 284 residues: Large ribosomal subunit protein uL2 (284 aa).

The disordered stretch occupies residues 232–284 (RGTAMNPVDHPHGGGEGRHNGYIPRTPWGKVTKGLKTRDKRKSNKWIVKDRRK). Over residues 240 to 250 (DHPHGGGEGRH) the composition is skewed to basic and acidic residues. Over residues 264–284 (KGLKTRDKRKSNKWIVKDRRK) the composition is skewed to basic residues.

This sequence belongs to the universal ribosomal protein uL2 family. Part of the 50S ribosomal subunit. Forms a bridge to the 30S subunit in the 70S ribosome.

In terms of biological role, one of the primary rRNA binding proteins. Required for association of the 30S and 50S subunits to form the 70S ribosome, for tRNA binding and peptide bond formation. It has been suggested to have peptidyltransferase activity; this is somewhat controversial. Makes several contacts with the 16S rRNA in the 70S ribosome. In Chlamydia abortus (strain DSM 27085 / S26/3) (Chlamydophila abortus), this protein is Large ribosomal subunit protein uL2.